The chain runs to 195 residues: uncharacterized protein (195 aa).

Residues 34-165 (SHHAAVLIPI…WLDIHRGGVN (132 aa)) enclose the Nudix hydrolase domain. A Nudix box motif is present at residues 72-94 (GKADPQDSSLIETALREAEEEVA). Positions 88 and 92 each coordinate Mg(2+).

This sequence belongs to the Nudix hydrolase family. PCD1 subfamily. Mn(2+) is required as a cofactor. It depends on Mg(2+) as a cofactor.

Its function is as follows. Probably mediates the hydrolysis of some nucleoside diphosphate derivatives. This is an uncharacterized protein from Yersinia enterocolitica serotype O:8 / biotype 1B (strain NCTC 13174 / 8081).